The sequence spans 86 residues: UPF0213 protein OB0043 (86 aa).

In terms of domain architecture, GIY-YIG spans 3 to 80 (EQHYVYILRC…LPRFEKLKLI (78 aa)).

It belongs to the UPF0213 family.

The chain is UPF0213 protein OB0043 from Oceanobacillus iheyensis (strain DSM 14371 / CIP 107618 / JCM 11309 / KCTC 3954 / HTE831).